We begin with the raw amino-acid sequence, 203 residues long: CASP-like protein 4B2 (203 aa).

Over 1 to 57 (MAMVTADASAAADAATKQPDVEKDYSSYNGASTAGAGGGGVVESVVARWRREDMLDK) the chain is Cytoplasmic. The chain crosses the membrane as a helical span at residues 58 to 78 (CPLALHAAAAAFAFVALVLVA). Residues 79-92 (SNQHGDWMQFDRYQ) lie on the Extracellular side of the membrane. The chain crosses the membrane as a helical span at residues 93–113 (EYMYLLAIAALAFAYSLAQAL). The Cytoplasmic segment spans residues 114 to 135 (RHAHRMRGGADPIPAPSARLFD). Residues 136-156 (FIADQVVAYLLMSALSAAIPI) traverse the membrane as a helical segment. Topologically, residues 157–171 (TNRMRTAVINNFTDA) are extracellular. A glycan (N-linked (GlcNAc...) asparagine) is linked at Asn167. Residues 172–192 (TAAAISMAFLAFVALALSATV) form a helical membrane-spanning segment. The Cytoplasmic segment spans residues 193–203 (SGYKLSRQMYM).

This sequence belongs to the Casparian strip membrane proteins (CASP) family. As to quaternary structure, homodimer and heterodimers.

Its subcellular location is the cell membrane. This is CASP-like protein 4B2 from Hordeum vulgare subsp. vulgare (Domesticated barley).